The primary structure comprises 526 residues: Cytochrome P450 monooxygenase ucsK (526 aa).

The helical transmembrane segment at 7–27 (PVLAAATAVSFGFYLAGLFVY) threads the bilayer. N403 is a glycosylation site (N-linked (GlcNAc...) asparagine). C467 lines the heme pocket.

It belongs to the cytochrome P450 family. It depends on heme as a cofactor.

It is found in the membrane. It functions in the pathway mycotoxin biosynthesis. Cytochrome P450 monooxygenase; part of the gene cluster that mediates the biosynthesis of UCS1025A, a member of the pyrrolizidinone family that acts as a strong telomerase inhibitor and displays potent antibacterial and antitumor properties. These compounds share a hemiaminal-containing pyrrolizidinone core fused with a gamma-lactone, giving a furopyrrolizidine that is connected to a decalin fragment. The polyketide synthase module (PKS) of the PKS-NRPS ucsA is responsible for the synthesis of the polyketide backbone via the condensation of an acetyl-CoA starter unit with 6 malonyl-CoA units. The downstream nonribosomal peptide synthetase (NRPS) module then amidates the carboxyl end of the polyketide with a 2S,3S-methylproline derived from L-isoleucine by the 2-oxoglutarate-dependent dioxygenase ucsF which converts L-isoleucine to (4S,5S)-4-methylpyrroline-5-carboxylate that is further converted to 2S,3S-methylproline by the pyrroline-5-carboxylate reductase ucsG. Reductive release of the completed aminoacyl polyketide from the assembly line can form the 3-pyrrolin-2-one structure via an intramolecular Knoevenagel reaction. Because ucsA lacks a designated enoylreductase (ER) domain, the required activity is provided the enoyl reductase ucsL. This keto acyclic precursor is the substrate of the Diels-Alderase ucsH, that catalyzes the Diels-Alder cycloaddition. Oxidation of the 3S-methyl group to a carboxylate by the cytochrome P450 monooxygenase ucsK allows an oxa-Michael cyclization that might involve the reductase/dehydrogenase ucsI and which furnishes the furopyrrolizidine. The oxidase ucsJ likely plays a critical role in stereoselective reduction of the C5-C6 double bond to afford the required R-configured carboxylate group. Further enolization and oxidation at C5 by an unidentified enzyme affords the last intermediate that can undergo oxa-Michael cyclization to yield UCS1025A. This Acremonium sp protein is Cytochrome P450 monooxygenase ucsK.